The chain runs to 643 residues: Alpha-dioxygenase 1 (643 aa).

The active-site Proton acceptor is the H167. D168 is a Ca(2+) binding site. H172 provides a ligand contact to heme b. Ca(2+) is bound by residues T220, W222, D224, and S226. Heme b contacts are provided by H392, R489, and R493.

Belongs to the peroxidase family. Heme b is required as a cofactor. It depends on Ca(2+) as a cofactor.

Its function is as follows. Alpha-dioxygenase that catalyzes the primary oxygenation step of a variety of 14-20 carbon fatty acids, containing up to three unsaturated bonds, into their corresponding 2R-hydroperoxides. Involved in the production of oxylipins that function in cell signaling, wound healing, and protection from infection. The lipid-derived signaling pathway is involved in the initial response of hot pepper plants to pathogen infection. The polypeptide is Alpha-dioxygenase 1 (Capsicum annuum (Capsicum pepper)).